A 363-amino-acid chain; its full sequence is MKIGVFVPIGNNGWLISTHAPQYMPTFELNKAIVQKAEHYHFDFALSMIKLRGFGGKTEFWDHNLESFTLMAGLAAVTSKIQIYATAATLTLPPAIVARMASTIDSISGGRFGVNLVTGWQKPEYDQMGMWPGDDYFASRYDYLTEYVQVLRDLWGTGRSDFKGDYFTMNDCRVSPRPSQPMKVICAGQSDAGMAFSAQHADYNFCFGKGVNTPTAFAPTAARMMQAAEKTGRDVGSYVLFMVIADETDEAARAKWEHYKAGADEEALAWLTEQSQKDTRSGSDTNVRQMADPTSAVNINMGTLVGSYASVARMLDEVASVPGTDGVLLTFDDFLAGIDAFGERIQPLMRCRNHIASVTREVA.

FMN-binding positions include 49–50, Asn115, Glu124, 140–141, and Ser190; these read IK and RY.

The protein belongs to the NtaA/SnaA/DszA monooxygenase family. RutA subfamily.

The enzyme catalyses uracil + FMNH2 + NADH + O2 = (Z)-3-ureidoacrylate + FMN + NAD(+) + H2O + H(+). It catalyses the reaction thymine + FMNH2 + NADH + O2 = (Z)-2-methylureidoacrylate + FMN + NAD(+) + H2O + H(+). Functionally, catalyzes the pyrimidine ring opening between N-3 and C-4 by an unusual flavin hydroperoxide-catalyzed mechanism, adding oxygen atoms in the process to yield ureidoacrylate peracid, that immediately reacts with FMN forming ureidoacrylate and FMN-N(5)-oxide. The FMN-N(5)-oxide reacts spontaneously with NADH to produce FMN. Requires the flavin reductase RutF to regenerate FMN in vivo. This chain is Pyrimidine monooxygenase RutA, found in Klebsiella pneumoniae subsp. pneumoniae (strain ATCC 700721 / MGH 78578).